The following is a 330-amino-acid chain: Aspartate--ammonia ligase (330 aa).

This sequence belongs to the class-II aminoacyl-tRNA synthetase family. AsnA subfamily.

The protein resides in the cytoplasm. The enzyme catalyses L-aspartate + NH4(+) + ATP = L-asparagine + AMP + diphosphate + H(+). It functions in the pathway amino-acid biosynthesis; L-asparagine biosynthesis; L-asparagine from L-aspartate (ammonia route): step 1/1. This chain is Aspartate--ammonia ligase, found in Shigella dysenteriae serotype 1 (strain Sd197).